We begin with the raw amino-acid sequence, 240 residues long: Dihydromonapterin reductase (240 aa).

Residue Y152 is the Proton acceptor of the active site.

Belongs to the short-chain dehydrogenases/reductases (SDR) family. FolM subfamily.

It catalyses the reaction (6S)-5,6,7,8-tetrahydrofolate + NADP(+) = 7,8-dihydrofolate + NADPH + H(+). The catalysed reaction is 7,8-dihydromonapterin + NADPH + H(+) = 5,6,7,8-tetrahydromonapterin + NADP(+). In terms of biological role, catalyzes the reduction of dihydromonapterin to tetrahydromonapterin. Also has lower activity with dihydrofolate. The chain is Dihydromonapterin reductase (folM) from Escherichia coli O139:H28 (strain E24377A / ETEC).